The sequence spans 158 residues: UPF0098 protein YbhB (158 aa).

The protein belongs to the UPF0098 family. In terms of assembly, homodimer.

Its subcellular location is the cytoplasm. This chain is UPF0098 protein YbhB (ybhB), found in Escherichia coli (strain K12).